Reading from the N-terminus, the 522-residue chain is Lysine--tRNA ligase (522 aa).

Residues 44–52 (PSGLPHIGT) carry the 'HIGH' region motif. The 'KMSKS' region motif lies at 290–294 (KISKS). An ATP-binding site is contributed by K293.

The protein belongs to the class-I aminoacyl-tRNA synthetase family.

It is found in the cytoplasm. It catalyses the reaction tRNA(Lys) + L-lysine + ATP = L-lysyl-tRNA(Lys) + AMP + diphosphate. In Rickettsia massiliae (strain Mtu5), this protein is Lysine--tRNA ligase.